A 317-amino-acid polypeptide reads, in one-letter code: MKRVTGVFLTLLRFSQFASSVLVMSLLAYAIHAYGNRGNKKTNFTLATGVISVFYLIALGILCLALPTLIYIGMYFCAELIVCMLWLAAFVVLAKAQGERSCSNTNADGLYYNPYSGQYTADSHRRACNSSQAAIAFSGLCFVLFLISVILLGINVLTPIRKRYQTQGMWRSGASMGTKLHRWSGLALSEPFEETAAYDNTNVRTGDVEAGAGDNAAYTSEPNGDARYATNDPNGQYHTTTTNTRYTTTTADPKTRYTTNDRNPGSANVANSAVDQHAYSTDESGDRSYQEKVTEGAHSGAMSGSTAEPNRNVNQMP.

Residues 1 to 13 lie on the Cytoplasmic side of the membrane; that stretch reads MKRVTGVFLTLLR. Residues 14-34 traverse the membrane as a helical segment; that stretch reads FSQFASSVLVMSLLAYAIHAY. At 35–49 the chain is on the extracellular side; the sequence is GNRGNKKTNFTLATG. Residue N43 is glycosylated (N-linked (GlcNAc...) asparagine). A helical transmembrane segment spans residues 50–70; that stretch reads VISVFYLIALGILCLALPTLI. Position 71 (Y71) is a topological domain, cytoplasmic. A helical membrane pass occupies residues 72–92; the sequence is IGMYFCAELIVCMLWLAAFVV. Residues 93-133 are Extracellular-facing; it reads LAKAQGERSCSNTNADGLYYNPYSGQYTADSHRRACNSSQA. N129 carries N-linked (GlcNAc...) asparagine glycosylation. A helical transmembrane segment spans residues 134–154; sequence AIAFSGLCFVLFLISVILLGI. Residues 155 to 317 are Cytoplasmic-facing; the sequence is NVLTPIRKRY…EPNRNVNQMP (163 aa). Positions 204–317 are disordered; that stretch reads RTGDVEAGAG…EPNRNVNQMP (114 aa). Residues 239-250 show a composition bias toward low complexity; the sequence is TTTTNTRYTTTT. Over residues 256 to 282 the composition is skewed to polar residues; sequence RYTTNDRNPGSANVANSAVDQHAYSTD. Over residues 284-295 the composition is skewed to basic and acidic residues; the sequence is SGDRSYQEKVTE. Residues 302-317 show a composition bias toward polar residues; the sequence is MSGSTAEPNRNVNQMP.

The protein localises to the membrane. This is an uncharacterized protein from Saccharomyces cerevisiae (strain ATCC 204508 / S288c) (Baker's yeast).